Consider the following 397-residue polypeptide: ATP-dependent RNA helicase eIF4A (397 aa).

The short motif at Tyr-23 to Gln-51 is the Q motif element. In terms of domain architecture, Helicase ATP-binding spans Ile-54 to Ile-224. Ala-67–Thr-74 provides a ligand contact to ATP. The DEAD box signature appears at Asp-172 to Asp-175. The Helicase C-terminal domain maps to Gly-235 to Phe-396.

The protein belongs to the DEAD box helicase family. eIF4A subfamily. Component of the eIF4F complex, which composition varies with external and internal environmental conditions. It is composed of at least eIF4A, eIF4E and eIF4G.

The protein localises to the cytoplasm. The catalysed reaction is ATP + H2O = ADP + phosphate + H(+). ATP-dependent RNA helicase which is a subunit of the eIF4F complex involved in cap recognition and is required for mRNA binding to ribosome. In the current model of translation initiation, eIF4A unwinds RNA secondary structures in the 5'-UTR of mRNAs which is necessary to allow efficient binding of the small ribosomal subunit, and subsequent scanning for the initiator codon. The sequence is that of ATP-dependent RNA helicase eIF4A (TIF1) from Scheffersomyces stipitis (strain ATCC 58785 / CBS 6054 / NBRC 10063 / NRRL Y-11545) (Yeast).